Consider the following 199-residue polypeptide: OPA3-like protein (199 aa).

A coiled-coil region spans residues 98–141 (RSSEKDKKKEEALQNRFKNLEEKLEVQQETINNLTNVIEAIQSS).

Belongs to the OPA3 family.

The chain is OPA3-like protein from Dictyostelium discoideum (Social amoeba).